Consider the following 360-residue polypeptide: MKKIILVAGGTGGHFFPAVALGEELIKRGYEVHFITDLRCQKYINQNMGLIFHILDLKRSDNIFLFLPNLSIAILKAIKLLYNIRSSVIIGFGGYPVIAPMFAAIFLRVPIIIYEQNSYLGKVNKFFASFAKKIAISYEDVKNLPEFVKSKIVVTGGIVRENIRNVCHSRESGNDIKRSKDNIFTVFIFGGSQGAKLFSELIPASIQILMQKQPNLKLNIIQQAALDDQVKIKDIYSKLNINYEFAEFFDNMALKYKEADLVISRAGASTIEELTYIGLPAIFIPLPSAADNHQYYNAKLLADKKAGWCLEQNSISAEELADKILDLINNPKILEDTSQNLLKRRKEGHVLLSDLIERVI.

Residues 11-13 (TGG), Asn117, Arg160, Ser192, and Gln294 each bind UDP-N-acetyl-alpha-D-glucosamine.

This sequence belongs to the glycosyltransferase 28 family. MurG subfamily.

It localises to the cell inner membrane. The catalysed reaction is di-trans,octa-cis-undecaprenyl diphospho-N-acetyl-alpha-D-muramoyl-L-alanyl-D-glutamyl-meso-2,6-diaminopimeloyl-D-alanyl-D-alanine + UDP-N-acetyl-alpha-D-glucosamine = di-trans,octa-cis-undecaprenyl diphospho-[N-acetyl-alpha-D-glucosaminyl-(1-&gt;4)]-N-acetyl-alpha-D-muramoyl-L-alanyl-D-glutamyl-meso-2,6-diaminopimeloyl-D-alanyl-D-alanine + UDP + H(+). It functions in the pathway cell wall biogenesis; peptidoglycan biosynthesis. Functionally, cell wall formation. Catalyzes the transfer of a GlcNAc subunit on undecaprenyl-pyrophosphoryl-MurNAc-pentapeptide (lipid intermediate I) to form undecaprenyl-pyrophosphoryl-MurNAc-(pentapeptide)GlcNAc (lipid intermediate II). The chain is UDP-N-acetylglucosamine--N-acetylmuramyl-(pentapeptide) pyrophosphoryl-undecaprenol N-acetylglucosamine transferase from Rickettsia felis (strain ATCC VR-1525 / URRWXCal2) (Rickettsia azadi).